The chain runs to 364 residues: Developmentally-regulated GTP-binding protein 2 (364 aa).

Lys21 carries the (3S)-3-hydroxylysine modification. One can recognise an OBG-type G domain in the interval 63–288 (ARVALIGFPS…LLEMLWEYLA (226 aa)). Residues 69–76 (GFPSVGKS), 94–98 (FTTLT), 115–118 (DLPG), 246–249 (NKID), and 269–271 (SCG) contribute to the GTP site. Mg(2+) is bound by residues Ser76 and Thr96. Positions 288–363 (ALTCIYTKKR…EHEDVIQIVK (76 aa)) constitute a TGS domain.

It belongs to the TRAFAC class OBG-HflX-like GTPase superfamily. OBG GTPase family. Interacts with RWDD1; this interaction confers protection to polyubiquitination and proteolytic degradation. Interacts with JMJD7; this interaction is direct. It depends on Mg(2+) as a cofactor. In terms of processing, polyubiquitinated. Hydroxylated (with S stereochemistry) at C-3 of Lys-21 by JMJD7. Fairly high levels in liver, heart, kidney, and brain. Very low levels in lung, spleen, testis and skeletal muscle.

It localises to the nucleus. The protein localises to the cytoplasm. It catalyses the reaction GTP + H2O = GDP + phosphate + H(+). Functionally, catalyzes the conversion of GTP to GDP through hydrolysis of the gamma-phosphate bond in GTP. When hydroxylated at C-3 of 'Lys-21' by JMJD7, may bind to RNA and play a role in translation. The chain is Developmentally-regulated GTP-binding protein 2 (Drg2) from Mus musculus (Mouse).